The sequence spans 619 residues: P-granule-associated protein deps-1 (619 aa).

A required for prg-1 binding region spans residues 62 to 101; that stretch reads NFDNIEEAKNLERRSKIPLKFGEVILWNESDCDHDKRIIL. Composition is skewed to low complexity over residues 563-592 and 600-619; these read SRATSARTTPAGSSIGSRSSIQSRASAATS and GPSSRRTPSGTPQSSTSSRV. Residues 563 to 619 form a disordered region; it reads SRATSARTTPAGSSIGSRSSIQSRASAATSVSSNRFVGPSSRRTPSGTPQSSTSSRV.

Interacts (via N-terminus) with prg-1; the interaction is direct. May interact with edg-1. Expressed in germ cells.

Its subcellular location is the cytoplasmic granule. The protein resides in the cytoplasm. It is found in the perinuclear region. Functionally, component of P-granules which is required for P-granule formation and integrity in adult germ cells. Promotes the accumulation of glh-1 mRNA and localization of pgl-1 to P-granules. Involved in RNA-mediated gene silencing (RNAi) in the germline. In particular, it is required for piwi-interacting RNA (piRNA) gene silencing and positively regulates the formation of secondary 22G-RNAs, which are RNA-dependent RNA polymerase-derived endo-siRNAs, typically 22 nucleotides in length with a 5'guanosine residue. Its role in RNAi may also be through positively regulating the expression of the dsRNA-binding protein rde-4. Plays a role in small RNA-directed transgenerational epigenetic inheritance. In Caenorhabditis elegans, this protein is P-granule-associated protein deps-1.